The following is a 315-amino-acid chain: Oxalate oxidoreductase subunit delta (315 aa).

2 4Fe-4S ferredoxin-type domains span residues Gln-252–Glu-280 and Glu-281–Glu-310. [4Fe-4S] cluster is bound by residues Cys-261, Cys-264, Cys-267, Cys-271, Cys-290, Cys-293, Cys-296, and Cys-300.

In terms of assembly, dimer of heterotrimer of one alpha, one beta and one delta subunit. Requires [4Fe-4S] cluster as cofactor.

The catalysed reaction is oxidized 2[4Fe-4S]-[ferredoxin] + oxalate = reduced 2[4Fe-4S]-[ferredoxin] + 2 CO2. In terms of biological role, catalyzes the anaerobic oxidation of oxalate using a broad range of electron acceptors, including ferredoxin and the nickel-dependent carbon monoxide dehydrogenase. Does not require coenzyme A as cosubstrate. Enables anaerobic growth on oxalate which is used as energy source by the bacteria. This Moorella thermoacetica (strain ATCC 39073 / JCM 9320) protein is Oxalate oxidoreductase subunit delta.